A 188-amino-acid chain; its full sequence is Probable DNA-directed RNA polymerase subunit delta (188 aa).

An HTH HARE-type domain is found at 14-83 (LSMIEVARAI…GENKWGLRSW (70 aa)). A disordered region spans residues 119–188 (EDAIDYSADD…EDEEDEEEEE (70 aa)).

Belongs to the RpoE family. In terms of assembly, RNAP is composed of a core of 2 alpha, a beta and a beta' subunits. The core is associated with a delta subunit and one of several sigma factors.

Participates in both the initiation and recycling phases of transcription. In the presence of the delta subunit, RNAP displays an increased specificity of transcription, a decreased affinity for nucleic acids, and an increased efficiency of RNA synthesis because of enhanced recycling. The sequence is that of Probable DNA-directed RNA polymerase subunit delta from Streptococcus equi subsp. equi (strain 4047).